We begin with the raw amino-acid sequence, 607 residues long: NAD-dependent protein deacetylase sir-2.1 (607 aa).

Positions 1 to 68 (MSRDSGNDSE…SVSSESWQNN (68 aa)) are disordered. The span at 55–64 (ESTTSVSSES) shows a compositional bias: low complexity. Positions 128-401 (KLTNYNSLAD…DSIMEQQGKT (274 aa)) constitute a Deacetylase sirtuin-type domain. Residues 153–172 (GAGV…DGIY) and 237–240 (QNID) contribute to the NAD(+) site. His255 (proton acceptor) is an active-site residue. Residues Cys263, Cys266, Cys287, and Cys290 each coordinate Zn(2+). NAD(+) contacts are provided by residues 327–329 (GSS), 352–354 (NRE), and Cys369. A disordered region spans residues 426–453 (EKRNDDSSDEPTLKKPRMSVADDSMDSE).

It belongs to the sirtuin family. Class I subfamily. In terms of assembly, interacts with ftt-2 and par-5. Interacts with daf-16 following heat-shock, which causes daf-16 to accumulate in the nucleus. Interaction with daf-16 is promoted by ftt-2. Interacts with transcriptional coregulator hcf-1. Zn(2+) serves as cofactor.

The protein resides in the nucleus. Its subcellular location is the cytoplasm. It catalyses the reaction N(6)-acetyl-L-lysyl-[protein] + NAD(+) + H2O = 2''-O-acetyl-ADP-D-ribose + nicotinamide + L-lysyl-[protein]. In terms of biological role, NAD-dependent deacetylase. Involved in metabolism, apoptosis, response to oxidative stress, response to DNA damage, and determination of lifespan. Required for a reduction of the 'Lys-16' acetylation of histone H4 (H4K16ac) on dosage-compensated X chromosomes in hermaphrodites. Plays a role in germ cell and somatic cell apoptosis in response to DNA damage. Functions upstream of daf-16/Forkhead box protein O in the Insulin/IGF-1-like signaling (IIS) mediated pathway, promoting daf-16 mediated transcriptional activation and increased lifespan. May also regulate lifespan independently of daf-16 by modulating the transcription of genes involved in the stress response of the endoplasmic reticulum (ER). Functions upstream of transcriptional coregulator hcf-1, perhaps acting independently of the IIS mediated pathway, to modulate lifespan and oxidative stress response. Acts upstream of the nicotinic acid metabolism pathway, which may be linked to the regulation of longevity. Plays a role in ascaroside-mediated longevity and stress resistance. The chain is NAD-dependent protein deacetylase sir-2.1 from Caenorhabditis elegans.